Here is a 407-residue protein sequence, read N- to C-terminus: Cell division protein FtsZ (407 aa).

Residues 18-22, 105-107, E136, R140, and D184 each bind GTP; these read GGGVN and GTG. The tract at residues 312-407 is disordered; it reads FDGGQPPARR…EELDVPDFLK (96 aa). 2 stretches are compositionally biased toward low complexity: residues 336 to 348 and 368 to 377; these read AAPARSSAESTRP and APATASGESS. Residues 381–390 show a composition bias toward pro residues; that stretch reads VSPPHVPPAR. The span at 396–407 shows a compositional bias: acidic residues; sequence QAEELDVPDFLK.

Belongs to the FtsZ family. Homodimer. Polymerizes to form a dynamic ring structure in a strictly GTP-dependent manner. Interacts directly with several other division proteins.

Its subcellular location is the cytoplasm. In terms of biological role, essential cell division protein that forms a contractile ring structure (Z ring) at the future cell division site. The regulation of the ring assembly controls the timing and the location of cell division. One of the functions of the FtsZ ring is to recruit other cell division proteins to the septum to produce a new cell wall between the dividing cells. Binds GTP and shows GTPase activity. The protein is Cell division protein FtsZ of Streptomyces griseus.